Reading from the N-terminus, the 474-residue chain is Aspartic-type endopeptidase ctsD (474 aa).

An N-terminal signal peptide occupies residues 1–19; that stretch reads MHLLQCLLSTISLASTVTA. The Peptidase A1 domain occupies 106 to 413; that stretch reads YFATVRVGSQ…DYDNHRIGFA (308 aa). Asp-124 is an active-site residue. Residues Asn-189, Asn-197, Asn-275, and Asn-301 are each glycosylated (N-linked (GlcNAc...) asparagine). The active site involves Asp-307. Residues Asn-338, Asn-344, and Asn-414 are each glycosylated (N-linked (GlcNAc...) asparagine). Residue Ser-452 is the site of GPI-anchor amidated serine attachment. The propeptide at 453–474 is removed in mature form; it reads ASIVSRFVHWPFIFALLCMVLV.

Belongs to the peptidase A1 family.

It is found in the cell membrane. Functionally, secreted aspartic-type endopeptidase which is secreted and contributes to virulence. In Aspergillus fumigatus (strain ATCC MYA-4609 / CBS 101355 / FGSC A1100 / Af293) (Neosartorya fumigata), this protein is Aspartic-type endopeptidase ctsD (ctsD).